Here is a 265-residue protein sequence, read N- to C-terminus: Putative 2-aminoethylphosphonate transport system permease protein PhnV (265 aa).

Helical transmembrane passes span Gly-13–Met-33, Leu-69–Ala-89, Val-104–Phe-124, Met-131–Phe-151, Leu-185–Gly-205, and Asn-233–Met-253. The region spanning Leu-65 to Met-253 is the ABC transmembrane type-1 domain.

It belongs to the binding-protein-dependent transport system permease family.

It is found in the cell inner membrane. Probably part of the PhnSTUV complex (TC 3.A.1.11.5) involved in 2-aminoethylphosphonate import. Probably responsible for the translocation of the substrate across the membrane. The sequence is that of Putative 2-aminoethylphosphonate transport system permease protein PhnV (phnV) from Salmonella typhimurium (strain LT2 / SGSC1412 / ATCC 700720).